The primary structure comprises 287 residues: Bifunctional protein FolD (287 aa).

Residues 164 to 166 (GSS), S189, and I230 contribute to the NADP(+) site.

This sequence belongs to the tetrahydrofolate dehydrogenase/cyclohydrolase family. As to quaternary structure, homodimer.

The enzyme catalyses (6R)-5,10-methylene-5,6,7,8-tetrahydrofolate + NADP(+) = (6R)-5,10-methenyltetrahydrofolate + NADPH. It carries out the reaction (6R)-5,10-methenyltetrahydrofolate + H2O = (6R)-10-formyltetrahydrofolate + H(+). Its pathway is one-carbon metabolism; tetrahydrofolate interconversion. Functionally, catalyzes the oxidation of 5,10-methylenetetrahydrofolate to 5,10-methenyltetrahydrofolate and then the hydrolysis of 5,10-methenyltetrahydrofolate to 10-formyltetrahydrofolate. The polypeptide is Bifunctional protein FolD (Aliarcobacter butzleri (strain RM4018) (Arcobacter butzleri)).